The sequence spans 220 residues: Peptide methionine sulfoxide reductase MsrA (220 aa).

The active site involves Cys59.

Belongs to the MsrA Met sulfoxide reductase family.

The enzyme catalyses L-methionyl-[protein] + [thioredoxin]-disulfide + H2O = L-methionyl-(S)-S-oxide-[protein] + [thioredoxin]-dithiol. It catalyses the reaction [thioredoxin]-disulfide + L-methionine + H2O = L-methionine (S)-S-oxide + [thioredoxin]-dithiol. Functionally, has an important function as a repair enzyme for proteins that have been inactivated by oxidation. Catalyzes the reversible oxidation-reduction of methionine sulfoxide in proteins to methionine. The protein is Peptide methionine sulfoxide reductase MsrA of Corynebacterium kroppenstedtii (strain DSM 44385 / JCM 11950 / CIP 105744 / CCUG 35717).